The sequence spans 408 residues: D-inositol 3-phosphate glycosyltransferase (408 aa).

His7 contributes to the 1D-myo-inositol 3-phosphate binding site. UDP-N-acetyl-alpha-D-glucosamine is bound by residues 13-14 (QP) and Gly21. Residues 18-23 (DAGGMN), Lys76, Tyr109, Thr133, and Arg153 each bind 1D-myo-inositol 3-phosphate. Residues Arg227, Lys232, and Val288 each contribute to the UDP-N-acetyl-alpha-D-glucosamine site. Mg(2+) is bound by residues Phe297, Arg298, and Ala300. UDP-N-acetyl-alpha-D-glucosamine-binding residues include Glu310 and Glu318. Position 324 (Thr324) interacts with Mg(2+).

Belongs to the glycosyltransferase group 1 family. MshA subfamily. As to quaternary structure, homodimer.

It catalyses the reaction 1D-myo-inositol 3-phosphate + UDP-N-acetyl-alpha-D-glucosamine = 1D-myo-inositol 2-acetamido-2-deoxy-alpha-D-glucopyranoside 3-phosphate + UDP + H(+). Catalyzes the transfer of a N-acetyl-glucosamine moiety to 1D-myo-inositol 3-phosphate to produce 1D-myo-inositol 2-acetamido-2-deoxy-glucopyranoside 3-phosphate in the mycothiol biosynthesis pathway. The polypeptide is D-inositol 3-phosphate glycosyltransferase (Paenarthrobacter aurescens (strain TC1)).